A 184-amino-acid polypeptide reads, in one-letter code: MEGGGVADVAVPGTRKRDRPYKGIRMRKWGKWVAEIREPNKRSRLWLGSYSTPEAAARAYDTAVFYLRGPTARLNFPELLPGEKFSDEDMSAATIRKKATEVGAQVDALGTAVQNNRHRVFGQNRDSDVDNKNFHRNYQNGEREEEEEDEDDKRLRSGGRLLDRVDLNKLPDPESSDEEWESKH.

Positions Pro-20–Pro-77 form a DNA-binding region, AP2/ERF. Positions Gln-123–His-184 are disordered. Residues Leu-161–Asp-172 are compositionally biased toward basic and acidic residues. The span at Glu-174–His-184 shows a compositional bias: acidic residues.

This sequence belongs to the AP2/ERF transcription factor family. ERF subfamily.

Its subcellular location is the nucleus. In terms of biological role, probably acts as a transcriptional activator. Binds to the GCC-box pathogenesis-related promoter element. May be involved in the regulation of gene expression by stress factors and by components of stress signal transduction pathways. The chain is Ethylene-responsive transcription factor ERF010 (ERF010) from Arabidopsis thaliana (Mouse-ear cress).